We begin with the raw amino-acid sequence, 261 residues long: Metallo-beta-lactamase fold-containing protein ST1585 (261 aa).

Residues His58, His60, Asp62, His63, His148, Asp165, and His207 each coordinate Zn(2+).

This sequence belongs to the metallo-beta-lactamase superfamily. In terms of assembly, monomer.

In Sulfurisphaera tokodaii (strain DSM 16993 / JCM 10545 / NBRC 100140 / 7) (Sulfolobus tokodaii), this protein is Metallo-beta-lactamase fold-containing protein ST1585.